Here is a 150-residue protein sequence, read N- to C-terminus: Monooxygenase dmxR10 (150 aa).

The protein belongs to the avfA family.

The protein operates within secondary metabolite biosynthesis. Monooxygenase; part of the gene cluster that mediates the biosynthesis of the dimeric xanthones cryptosporioptides. The pathway begins with the synthesis of atrochrysone thioester by the polyketide synthase dmx-nrPKS. The atrochrysone carboxyl ACP thioesterase dmxR1 then breaks the thioester bond and releases the atrochrysone carboxylic acid from dmx-nrPKS. Atrochrysone carboxylic acid is decarboxylated by the decarboxylase dmxR15, and oxidized by the anthrone oxygenase dmxR16 to yield emodin. Emodin is then reduced to emodin hydroquinone by the oxidoreductase dmxR7. A-ring reduction by the short chain dehydrogenase dmxR18, dehydration by the scytalone dehydratase-like protein dmxR17 and probable spontaneous re-oxidation, results in overall deoxygenation to chrysophanol. Baeyer-Villiger oxidation by the Baeyer-Villiger monooxygenase (BVMO) dmxR6 then yields monodictylactone in equilibrium with monodictyphenone. In the case of the cryptosporioptides biosynthesis, monodictylactone is reduced at C-12 to an alcohol (by the short chain dehydrogenases dmxR12 or dmxR8) and hydroxylated at C-5 by dmxR9, yielding the electron-rich aromatic which could eliminate H(2)O to form the ortho-quinonemethide, followed by tautomerisation to paraquinone and complete the formal reduction to produce the 10-methylgroup. Conjugate addition of C-4a-OH to the resulting paraquinone by the monooxygenase dmxR10 then gives cyclohexadienone, which is then reduced at C-5 by the short chain dehydrogenase dmxR3 to give the dihydroxanthone. The 6,7-epoxide in the cryptosporioptides could be introduced by the cytochrome P450 monooxygenase dmxL3. The highly reducing PKS dmxL2 manufactures butyrate, which is further carboxylated by dmxL1 to form ethylmalonate. It is not yet clear whether the carboxylation occurs while the butyrate is attached to the ACP of dmxL2, but this unusual fungal metabolite could then be esterified to O-5 by the O-acetyltransferase dmxR13. Finally, dimerization performed by dmxR5 gives the observed dimers cryptosporioptides A, B and C as the final products of the pathway. The chain is Monooxygenase dmxR10 from Cryptosporiopsis sp. (strain 8999).